The primary structure comprises 90 residues: Cell division topological specificity factor (90 aa).

It belongs to the MinE family.

Its function is as follows. Prevents the cell division inhibition by proteins MinC and MinD at internal division sites while permitting inhibition at polar sites. This ensures cell division at the proper site by restricting the formation of a division septum at the midpoint of the long axis of the cell. This chain is Cell division topological specificity factor, found in Clostridium perfringens (strain ATCC 13124 / DSM 756 / JCM 1290 / NCIMB 6125 / NCTC 8237 / Type A).